The chain runs to 459 residues: Chromosomal replication initiator protein DnaA (459 aa).

The segment at 1–73 is domain I, interacts with DnaA modulators; sequence MEIPIESLWS…AHAVQDILGH (73 aa). Positions 73-117 are domain II; it reads HPVGIYITVAQGDEVSHFSEREVSWESTNPSSIPESLPHHNHKTT. Residues 118–334 form a domain III, AAA+ region region; that stretch reads ELNSKYVFSR…GALIRAVAYI (217 aa). ATP contacts are provided by glycine 162, glycine 164, lysine 165, and threonine 166. Residues 335–459 are domain IV, binds dsDNA; it reads SIWGLPMTVE…INMTSRSQKS (125 aa).

Belongs to the DnaA family. Oligomerizes as a right-handed, spiral filament on DNA at oriC.

The protein localises to the cytoplasm. In terms of biological role, plays an essential role in the initiation and regulation of chromosomal replication. ATP-DnaA binds to the origin of replication (oriC) to initiate formation of the DNA replication initiation complex once per cell cycle. Binds the DnaA box (a 9 base pair repeat at the origin) and separates the double-stranded (ds)DNA. Forms a right-handed helical filament on oriC DNA; dsDNA binds to the exterior of the filament while single-stranded (ss)DNA is stabiized in the filament's interior. The ATP-DnaA-oriC complex binds and stabilizes one strand of the AT-rich DNA unwinding element (DUE), permitting loading of DNA polymerase. After initiation quickly degrades to an ADP-DnaA complex that is not apt for DNA replication. Binds acidic phospholipids. This chain is Chromosomal replication initiator protein DnaA, found in Nostoc punctiforme (strain ATCC 29133 / PCC 73102).